The sequence spans 817 residues: Protein kintoun (817 aa).

Disordered stretches follow at residues 233-259 (AEST…PRCS), 385-404 (AGAR…RKSC), 410-445 (AGTA…TPEN), and 473-503 (VQTS…KPLC). A compositionally biased stretch (basic and acidic residues) spans 386 to 401 (GAREESADSSGADHGR). Phosphoserine occurs at positions 622 and 631. A disordered region spans residues 653 to 692 (ECSDPDGLQGKEKGVKEECPLSEKENTEHSTTSTADSNSS). A compositionally biased stretch (basic and acidic residues) spans 661–680 (QGKEKGVKEECPLSEKENTE). Polar residues predominate over residues 681–692 (HSTTSTADSNSS).

It belongs to the PIH1 family. Kintoun subfamily. Interacts with CFAP300. Interacts with DNAI2 and HSPA1A. Interacts with DNAAF4. Interacts with DNAAF6/PIH1D3.

Its subcellular location is the cytoplasm. It is found in the dynein axonemal particle. Functionally, required for cytoplasmic pre-assembly of axonemal dyneins, thereby playing a central role in motility in cilia and flagella. Involved in pre-assembly of dynein arm complexes in the cytoplasm before intraflagellar transport loads them for the ciliary compartment. This Rattus norvegicus (Rat) protein is Protein kintoun.